The chain runs to 382 residues: 1-deoxy-D-xylulose 5-phosphate reductoisomerase (382 aa).

NADPH is bound by residues T10, G11, S12, I13, N38, and N120. K121 is a binding site for 1-deoxy-D-xylulose 5-phosphate. E122 lines the NADPH pocket. Mn(2+) is bound at residue D146. 1-deoxy-D-xylulose 5-phosphate-binding residues include S147, E148, S172, and H195. E148 contacts Mn(2+). G201 is an NADPH binding site. 4 residues coordinate 1-deoxy-D-xylulose 5-phosphate: S208, N213, K214, and E217. E217 serves as a coordination point for Mn(2+).

It belongs to the DXR family. Requires Mg(2+) as cofactor. It depends on Mn(2+) as a cofactor.

The enzyme catalyses 2-C-methyl-D-erythritol 4-phosphate + NADP(+) = 1-deoxy-D-xylulose 5-phosphate + NADPH + H(+). It participates in isoprenoid biosynthesis; isopentenyl diphosphate biosynthesis via DXP pathway; isopentenyl diphosphate from 1-deoxy-D-xylulose 5-phosphate: step 1/6. Catalyzes the NADPH-dependent rearrangement and reduction of 1-deoxy-D-xylulose-5-phosphate (DXP) to 2-C-methyl-D-erythritol 4-phosphate (MEP). The sequence is that of 1-deoxy-D-xylulose 5-phosphate reductoisomerase from Thermoanaerobacter sp. (strain X514).